Reading from the N-terminus, the 308-residue chain is Polyprenal reductase (308 aa).

Topologically, residues 1–2 (MT) are cytoplasmic. A helical membrane pass occupies residues 3-23 (LLALVWLLLDATFLITLLWHL). Topologically, residues 24–65 (LQGCKSGHSLLCSVFQDLIRYGKTKTGLQRPAWLQWFDIPKR) are lumenal. The chain crosses the membrane as a helical span at residues 66 to 86 (CFWHFYCVSLIWNGCLLWILL). Residues 87–120 (RLLLQSVPVPEWLQLVLHFLHAGSEPQILDRELS) are Cytoplasmic-facing. The chain crosses the membrane as a helical span at residues 121 to 141 (VILALALLWLHSLRRLLECLF). Topologically, residues 142-148 (VSVFSNG) are lumenal. A helical transmembrane segment spans residues 149 to 169 (VIHLVQYCFGLGYYFLIGITV). The Cytoplasmic portion of the chain corresponds to 170 to 184 (LTYCPLDRRTVSTDN). Residues 185–205 (LLTQCHWYHILGLALYIWASL) traverse the membrane as a helical segment. Residues 206–255 (HQYRCHCILAGLRKSASGNVINLNHSVPCGDWFERVSCPHYFAELLIYVS) lie on the Lumenal side of the membrane. A helical transmembrane segment spans residues 256–276 (IAVVFGLLNTIWWLVVLYVLL). At 277–308 (NQALAALLCHEFYHEKFDTYPIHRKAFIPFIF) the chain is on the cytoplasmic side.

This sequence belongs to the steroid 5-alpha reductase family. Polyprenal reductase subfamily.

It is found in the endoplasmic reticulum membrane. The catalysed reaction is a di-trans,poly-cis-dolichal + NADP(+) = a di-trans,poly-cis-polyprenal + NADPH + H(+). The enzyme catalyses a 3-oxo-5alpha-steroid + NADP(+) = a 3-oxo-Delta(4)-steroid + NADPH + H(+). It carries out the reaction androst-4-ene-3,17-dione + NADPH + H(+) = 5alpha-androstan-3,17-dione + NADP(+). It catalyses the reaction 17beta-hydroxy-5alpha-androstan-3-one + NADP(+) = testosterone + NADPH + H(+). Its pathway is protein modification; protein glycosylation. In terms of biological role, plays a key role in early steps of protein N-linked glycosylation by being involved in the conversion of polyprenol into dolichol. Acts as a polyprenal reductase that mediates the reduction of polyprenal into dolichal in a NADP-dependent mechanism. Dolichols are required for the synthesis of dolichol-linked monosaccharides and the oligosaccharide precursor used for N-glycosylation. Also able to convert testosterone (T) into 5-alpha-dihydrotestosterone (DHT). The polypeptide is Polyprenal reductase (srd5a3) (Xenopus tropicalis (Western clawed frog)).